The chain runs to 820 residues: DNA mismatch repair protein MutS (820 aa).

615-622 (GPNMAGKS) serves as a coordination point for ATP.

It belongs to the DNA mismatch repair MutS family.

In terms of biological role, this protein is involved in the repair of mismatches in DNA. It is possible that it carries out the mismatch recognition step. This protein has a weak ATPase activity. This chain is DNA mismatch repair protein MutS, found in Anaplasma phagocytophilum (strain HZ).